The following is a 414-amino-acid chain: Triose phosphate/phosphate translocator, chloroplastic (414 aa).

Residues 1-78 (MESRVLTGGA…ILLETSPKRE (78 aa)) constitute a chloroplast transit peptide. Over 79 to 108 (SIKPCSAAASSSAGSSDSSGDAKVGFFNKA) the chain is Chloroplast intermembrane. A helical transmembrane segment spans residues 109–129 (TLTTGFFFFMWYFLNVIFNIL). The Lumenal portion of the chain corresponds to 130-141 (NKKIYNYFPYPY). Residues 142-162 (FVSVIHLAVGVVYCLVSWGVG) traverse the membrane as a helical segment. Topologically, residues 163–219 (LPKRAPIDSTQLKLLTPVAFCHALGHVTSNVSFAAVRVSFTHTVKALEPFFNAAASQ) are chloroplast intermembrane. Residues 220–240 (FILGQQIPLALWLSLAPVVLG) form a helical membrane-spanning segment. The Lumenal segment spans residues 241-284 (VSMASLTELSFNWLGFTSAMISNISFTYRSIYSKKAMTDMDSTN). The chain crosses the membrane as a helical span at residues 285–304 (VYAYISIIALIFCLPPAIFI). At 305–382 (EGPQLLQHGF…VIFGNKISTQ (78 aa)) the chain is on the chloroplast intermembrane side. Residues 383–403 (TGIGTCIAIAGVAIYSFIKAK) traverse the membrane as a helical segment. The Lumenal portion of the chain corresponds to 404–414 (MEEEKRQKKAA).

It belongs to the TPT transporter family. TPT (TC 2.A.7.9) subfamily.

The protein resides in the plastid. The protein localises to the chloroplast membrane. Functionally, mediates the export of fixed carbons from the chloroplasts into the cytosol in the form of triose phosphates. This Solanum tuberosum (Potato) protein is Triose phosphate/phosphate translocator, chloroplastic (TPT).